The following is a 252-amino-acid chain: Receptor expression-enhancing protein 3-B (252 aa).

3 helical membrane passes run 1 to 21, 35 to 55, and 57 to 77; these read MVSGMICKAVVLVFGILYPAY, YVRWMMYWIVFALYTVTETIA, and LTVSWFPLYFELKIAFVVWLL. A disordered region spans residues 163–225; it reads ETAETRFFPD…GLRRSQSMRS (63 aa). Residues 198–211 are compositionally biased toward acidic residues; sequence RTDEDVEVNSEDEV.

This sequence belongs to the DP1 family.

The protein resides in the endoplasmic reticulum membrane. Microtubule-binding protein required to ensure proper cell division and nuclear envelope reassembly by sequestering the endoplasmic reticulum away from chromosomes during mitosis. Probably acts by clearing the endoplasmic reticulum membrane from metaphase chromosomes. This chain is Receptor expression-enhancing protein 3-B (reep3-b), found in Xenopus laevis (African clawed frog).